Reading from the N-terminus, the 275-residue chain is MPQVTMRQMLEAGVHFGHQTRYWNPKMAPYIFGARGKIHIINLEKTVPLFNDAMNFLSSIAQKRGTVLFLGTKRSARESIKEEAERCNMPFMTQRWLGGTLTNFRTVKQSVARLKELEAAETDGTFEKLVKHEVLGLRREREKLDASLGGIKEMNRLPDAIFVIDIGHEDIAIKEAKKLGIPVIAVVDTNYDPALVDYAIPGNDDAIRAVQLYARAAADAVLEGKAAAPNSASVREEEFSAEAGDEGKGRRAPAKKATEKKADAPAAAPEAPAAE.

The tract at residues 226-275 is disordered; that stretch reads AAAPNSASVREEEFSAEAGDEGKGRRAPAKKATEKKADAPAAAPEAPAAE. A compositionally biased stretch (low complexity) spans 264-275; it reads APAAAPEAPAAE.

The protein belongs to the universal ribosomal protein uS2 family.

In Xanthomonas campestris pv. campestris (strain 8004), this protein is Small ribosomal subunit protein uS2.